Consider the following 608-residue polypeptide: V-type ATP synthase subunit I (608 aa).

9 helical membrane passes run 308–325 (ISFI…MIIG), 327–346 (AAYG…SFLL), 356–376 (GLIF…GTWF), 405–425 (IIFI…VWNF), 438–458 (IAQI…LNLI), 464–484 (FPMY…VFVF), 495–515 (CILK…SGFA), 517–537 (IISY…SASF), and 550–570 (IGLI…NIML).

This sequence belongs to the V-ATPase 116 kDa subunit family.

It is found in the cell membrane. Functionally, produces ATP from ADP in the presence of a proton gradient across the membrane. This is V-type ATP synthase subunit I (atpI) from Borreliella burgdorferi (strain ATCC 35210 / DSM 4680 / CIP 102532 / B31) (Borrelia burgdorferi).